The chain runs to 775 residues: Venom dipeptidyl peptidase 4 (775 aa).

Positions 1–23 (MEVLVQLALLLVVHGSLVVLVAG) are cleaved as a signal peptide. N-linked (GlcNAc...) asparagine glycans are attached at residues Asn-68 and Asn-239. 2 disulfide bridges follow: Cys-450–Cys-453 and Cys-463–Cys-481. N-linked (GlcNAc...) asparagine glycosylation is found at Asn-473, Asn-505, Asn-578, and Asn-631. The Charge relay system role is filled by Ser-639. A disulfide bridge connects residues Cys-659 and Cys-770. N-linked (GlcNAc...) asparagine glycans are attached at residues Asn-689 and Asn-694. Residues Asp-718 and His-750 each act as charge relay system in the active site.

The protein belongs to the peptidase S9B family. DPPIV subfamily. Expressed by the venom duct.

The protein localises to the secreted. It carries out the reaction Release of an N-terminal dipeptide, Xaa-Yaa-|-Zaa-, from a polypeptide, preferentially when Yaa is Pro, provided Zaa is neither Pro nor hydroxyproline.. Its activity is regulated as follows. Inhibited by diprotin A. Functionally, venom dipeptidyl-peptidase which removes N-terminal dipeptides sequentially from polypeptides having unsubstituted N-termini provided that the penultimate residue is proline. May process promelittin into its active form and/or modulate the chemotactic activity of immune cells after the insect sting. In Apis mellifera (Honeybee), this protein is Venom dipeptidyl peptidase 4.